We begin with the raw amino-acid sequence, 98 residues long: DNA-binding protein Fis (98 aa).

A DNA-binding region (H-T-H motif) is located at residues 74 to 93 (QTRAATMMGINRGTLRKKLK).

This sequence belongs to the transcriptional regulatory Fis family. In terms of assembly, homodimer.

Its function is as follows. Activates ribosomal RNA transcription. Plays a direct role in upstream activation of rRNA promoters. This chain is DNA-binding protein Fis, found in Photobacterium profundum (strain SS9).